Reading from the N-terminus, the 139-residue chain is Acyl carrier protein 5, chloroplastic (139 aa).

The N-terminal 54 residues, 1–54 (MATSFCSSISMQAPFSATTTRFCLNKQATIFNNEKTNNLSFSLRRLMPARLAVS), are a transit peptide targeting the chloroplast. The region spanning 59 to 134 (QETVEKVSEI…QAAELIEELV (76 aa)) is the Carrier domain. The residue at position 94 (Ser-94) is an O-(pantetheine 4'-phosphoryl)serine.

Belongs to the acyl carrier protein (ACP) family. In terms of processing, 4'-phosphopantetheine is transferred from CoA to a specific serine of apo-ACP by acpS. This modification is essential for activity because fatty acids are bound in thioester linkage to the sulfhydryl of the prosthetic group.

The protein localises to the plastid. It is found in the chloroplast. Its function is as follows. Carrier of the growing fatty acid chain in fatty acid biosynthesis. This chain is Acyl carrier protein 5, chloroplastic (ACP5), found in Arabidopsis thaliana (Mouse-ear cress).